Consider the following 1389-residue polypeptide: MAKPALKAAKEALVVKNYELAIEQSKKALSFDANNYNANVFLGVAYFSTKQLSESKEAYLDAIKIDEKAVLAWQGLWNLYESTHDISELHKITPILASKFLELEEQNKCLNTVNKYMEVVKKYGNKADEFKALKLLTPEEGEIYEYLEGRVLPLQTVYMQMVDIQESMDRCYFESEVNKRKTRLGARLEQVMRDVELEIYKDSPLETLYNQIINYAETDEIRRLTESKLLHMYNKLLILSEIKEKSHWRERIWDLIQGMVTLHIPEQAAWTIYFEWQDHSDISFFQSAELQEYIELFPGSPLAQALFAFRNSDLWHKEHPIQLEDSNNSAELAKETKEEDDSENSVDKKENEEDIISSTMMPQDEVLANLTEAYENAPQSTIISECLAKYYIHLKEYEYAIGLSKAALEVLKRLQQDTGVKLDKLTRIFQLCLAIGYSHYEVPRYLFQAMHYYDILLAADPRNYHALLGKGLVQIENEQYSDAVKTLGLLLDDHENDPSLSELSWCYFKTGNLPKAISTVEKCLDVLLSMDVERFKIAEAYYRYGIYILNRKSENYLEDSFSAFVSSLRKDPNYAPAYTSLGLYYRDIHDMVRATKCFQKAFELDASQVEAAEALAKTFAEANEWELVEVISRRVLNTSENDLKRKKKFNWHHTSLGVLELNAKNFHKAIVHFQSALRISPKDTNAWSGLGEAYARSGRYVSALKAFNRASILDPDDWYVKYFIATLEKDMGEYEVAVSTLSEILAVRSKELCVQVSLAETYVRLAKLYHARGFYSRAADSLEKSIQICCNVLKEDITSIFSWEILGDACLSFCQLKNYHNRFPNSLISDILFTTEAMKCANNGRQFENMIYLPDLETSSGAIFIAAVAITCFTIHLSLVADDKLLLPVSWYNLGSSYYRFYECDTTKDATLQVAINCIKQAIKLEAKNYVFWNMLGVLFSQTKAVRSAQHCYIQSLLLNERSSGVWANYGALCIQNHDVECANAAFTRSISIDPDNSQAWLGKAYCSIAVGSIRKAVQIIHHAFEISSGKMPDVNYWYADTMLHAVNTEDFVTTDGDIWSATYAIKRYLGENPTDTFAYYIKASLLEHLGETTDSVPSAIRLCELLEQEYDVSESPVILKRFIDAKALLGRLYLAKKSFENSVEQAGIALDLLEGEEDEDIKRTTLGLNLTCGTASFFLNKLEKSLDCFEKALLVSDSNADVVVLVSKVLWALGSENGKQAAREQLFEALEQSPSHIGSLLCLGAIAIYDEDDAVCSAIEDSIAHLKKDEVLRSGALKQVQIMEVLLTKKIDESMIKSLLQRFLHVYPFAASSWTLLTNRYASKSLANAFATTLYTHPSRPDDLAQSYRLQNSIDRAQVAIHLVPWDSANWKALHGVTHEALVSSDAS.

3 TPR repeats span residues 2 to 35 (AKPA…DANN), 36 to 69 (YNAN…DEKA), and 90 to 123 (HKIT…VKKY). A disordered region spans residues 326-355 (SNNSAELAKETKEEDDSENSVDKKENEEDI). TPR repeat units lie at residues 381 to 414 (TIIS…LKRL), 429 to 463 (FQLC…DPRN), 465 to 497 (HALL…HEND), 498 to 530 (PSLS…LLSM), 538 to 574 (AEAY…DPNY), 575 to 608 (APAY…DASQ), 650 to 683 (NWHH…SPKD), 684 to 717 (TNAW…DPDD), 719 to 751 (YVKY…RSKE), 759 to 792 (AETY…CCNV), 931 to 963 (VFWN…NERS), 964 to 997 (SGVW…DPDN), 999 to 1031 (QAWL…SSGK), 1124 to 1157 (IDAK…LEGE), and 1167 to 1200 (LGLN…SDSN).

Component of the SKI complex composed of at least ski2, ski3 and ski8. The SKI complex interacts with ski7, which makes the link between the SKI complex and the exosome in order to perform mRNA degradation.

The protein localises to the cytoplasm. Component of the SKI complex involved in 3'-mRNA degradation pathway. The chain is Superkiller protein 3 (ski3) from Schizosaccharomyces pombe (strain 972 / ATCC 24843) (Fission yeast).